We begin with the raw amino-acid sequence, 223 residues long: Small ribosomal subunit protein uS3 (223 aa).

The KH type-2 domain occupies 39–108; sequence IRKFVKKKGA…VILINIVEVK (70 aa).

This sequence belongs to the universal ribosomal protein uS3 family. Part of the 30S ribosomal subunit. Forms a tight complex with proteins S10 and S14.

In terms of biological role, binds the lower part of the 30S subunit head. Binds mRNA in the 70S ribosome, positioning it for translation. The polypeptide is Small ribosomal subunit protein uS3 (Clostridium kluyveri (strain NBRC 12016)).